We begin with the raw amino-acid sequence, 181 residues long: Probable nicotinate-nucleotide adenylyltransferase (181 aa).

It belongs to the NadD family.

The enzyme catalyses nicotinate beta-D-ribonucleotide + ATP + H(+) = deamido-NAD(+) + diphosphate. The protein operates within cofactor biosynthesis; NAD(+) biosynthesis; deamido-NAD(+) from nicotinate D-ribonucleotide: step 1/1. Its function is as follows. Catalyzes the reversible adenylation of nicotinate mononucleotide (NaMN) to nicotinic acid adenine dinucleotide (NaAD). This Campylobacter jejuni subsp. jejuni serotype O:23/36 (strain 81-176) protein is Probable nicotinate-nucleotide adenylyltransferase.